The following is a 59-amino-acid chain: MKIKVKLIKGLAGKDQKQKQALRSLGLKKIYEERILEKNPAVLGNLDKVRHLVKVEEVE.

This sequence belongs to the universal ribosomal protein uL30 family. Part of the 50S ribosomal subunit.

The protein is Large ribosomal subunit protein uL30 of Sulfurihydrogenibium sp. (strain YO3AOP1).